A 331-amino-acid chain; its full sequence is MPEAEMKEEAPEAHFTVDKQNISLWPREPPPKQDLSPVLRKPLCICVAFTCLALVLVTSIVLQAVFYPRLMGKILDVKSDAQMLKGRVDNISTLGSDLKTERGRVDDAEVQMQIVNTTLKRVRSQILSLETSMKIANDQLQILTMSWGEVDSLSAKIPELKRDLDKASALNTKVQGLQNSLENVNKLLKQQSDILEMVARGWKYFSGNFYYFSRTPKTWYSAEQFCISRKAHLTSVSSESEQKFLYKAADGIPHWIGLTKAGSEGDWYWVDQTSFNKEQSRRFWIPGEPNNAGNNEHCANIRVSALKCWNDGPCDNTFLFICKRPYVQTTE.

Residues 1–41 lie on the Cytoplasmic side of the membrane; that stretch reads MPEAEMKEEAPEAHFTVDKQNISLWPREPPPKQDLSPVLRK. A helical; Signal-anchor for type II membrane protein membrane pass occupies residues 42–62; the sequence is PLCICVAFTCLALVLVTSIVL. At 63–331 the chain is on the extracellular side; sequence QAVFYPRLMG…CKRPYVQTTE (269 aa). N90 and N116 each carry an N-linked (GlcNAc...) asparagine glycan. Residues 106-197 adopt a coiled-coil conformation; sequence DDAEVQMQIV…LKQQSDILEM (92 aa). Residues 205-323 form the C-type lectin domain; that stretch reads FSGNFYYFSR…CDNTFLFICK (119 aa). 2 cysteine pairs are disulfide-bonded: C226–C322 and C298–C314.

As to quaternary structure, homotrimer. As to expression, expressed by Langerhans cells. Expressed in dendritic cells and by scattered cells in lymph nodes and spleen. Also detected in some non-lymphoid tissues such as lung, liver and heart.

It is found in the membrane. In terms of biological role, calcium-dependent lectin displaying mannose-binding specificity. Induces the formation of Birbeck granules (BGs); is a potent regulator of membrane superimposition and zippering. Binds to sulfated as well as mannosylated glycans, keratan sulfate (KS) and beta-glucans. Facilitates uptake of antigens and is involved in the routing and/or processing of antigen for presentation to T cells. This Mus musculus (Mouse) protein is C-type lectin domain family 4 member K (Cd207).